The sequence spans 181 residues: Endoribonuclease YbeY (181 aa).

Zn(2+) is bound by residues H120, H124, and H130. The disordered stretch occupies residues 157 to 181 (AGGKRPAGGADGADGAGEPGPTAAR). A compositionally biased stretch (gly residues) spans 161–174 (RPAGGADGADGAGE).

It belongs to the endoribonuclease YbeY family. Zn(2+) serves as cofactor.

It localises to the cytoplasm. Functionally, single strand-specific metallo-endoribonuclease involved in late-stage 70S ribosome quality control and in maturation of the 3' terminus of the 16S rRNA. This Frankia alni (strain DSM 45986 / CECT 9034 / ACN14a) protein is Endoribonuclease YbeY.